The sequence spans 384 residues: Class V chitinase CHIT5a (384 aa).

The N-terminal stretch at 1 to 27 (MAVQKIIITPILVFLVTIFFNVSSSSS) is a signal peptide. N-linked (GlcNAc...) asparagine glycosylation is found at N29, N114, and N133. The GH18 domain occupies 39-384 (GVRSAYWPAG…SKQASNAWGH (346 aa)). E152 (proton donor) is an active-site residue. N-linked (GlcNAc...) asparagine glycans are attached at residues N195 and N234.

It belongs to the glycosyl hydrolase 18 family. Chitinase class V subfamily.

The enzyme catalyses Random endo-hydrolysis of N-acetyl-beta-D-glucosaminide (1-&gt;4)-beta-linkages in chitin and chitodextrins.. Its pathway is glycan degradation; chitin degradation. In terms of biological role, possesses chitinase activity in vitro toward glycol chitin, carboxymethyl-chitin, colloidal chitin, and the chitin oligosaccharides (N-acetylglucosamine) (GlcNAc)6 and (GlcNAc)5. Hydrolyzes (GlcNAc)6 into (GlcNAc)4 and (GlcNAc)2, or two (GlcNAc)3 molecules. Has the capacity to inhibit hyphal growth of the fungus Trichoderma viride in an agar-plate bioassay. The protein is Class V chitinase CHIT5a of Medicago truncatula (Barrel medic).